A 299-amino-acid polypeptide reads, in one-letter code: HTH-type transcriptional regulator CysL (299 aa).

Positions 1 to 58 constitute an HTH lysR-type domain; sequence MYYDVLKTFIAVVEEKNFTKAAEKLMISQPSVSLHIKNLEKEFQTALLNRSPKHFTTT. The H-T-H motif DNA-binding region spans 18 to 37; sequence FTKAAEKLMISQPSVSLHIK.

The protein belongs to the LysR transcriptional regulatory family.

Transcriptional activator of the cysJI operon which is involved in sulfur assimilation. Also negatively regulates its own transcription. In Bacillus subtilis (strain 168), this protein is HTH-type transcriptional regulator CysL (cysL).